The chain runs to 906 residues: Ribonucleoside-diphosphate reductase large subunit-like protein (906 aa).

Disordered stretches follow at residues 1 to 70 (MNPA…AGNT) and 89 to 129 (VSWR…LSTF). Residues 98 to 109 (PDGTPSVLSLTR) are compositionally biased toward polar residues.

It belongs to the ribonucleoside diphosphate reductase large chain family.

Its subcellular location is the virion. The protein resides in the host cytoplasm. Its function is as follows. Does not possess a ribonucleotide reductase activity. Betaherpesviruses probably use another strategy to expand the dNTP pool in a quiescent host cell. This Human cytomegalovirus (strain AD169) (HHV-5) protein is Ribonucleoside-diphosphate reductase large subunit-like protein.